Consider the following 478-residue polypeptide: Cysteine--tRNA ligase (478 aa).

Cys-29 is a Zn(2+) binding site. Residues 31-41 carry the 'HIGH' region motif; it reads PTVYDIPHIGN. Zn(2+) is bound by residues Cys-216, His-241, and Glu-245. Residues 274–278 carry the 'KMSKS' region motif; sequence KMSKS. Lys-277 is an ATP binding site.

This sequence belongs to the class-I aminoacyl-tRNA synthetase family. Monomer. It depends on Zn(2+) as a cofactor.

It localises to the cytoplasm. The enzyme catalyses tRNA(Cys) + L-cysteine + ATP = L-cysteinyl-tRNA(Cys) + AMP + diphosphate. In Orientia tsutsugamushi (strain Ikeda) (Rickettsia tsutsugamushi), this protein is Cysteine--tRNA ligase.